A 105-amino-acid polypeptide reads, in one-letter code: Nitrogenase-stabilizing/protective protein NifW (105 aa).

Belongs to the NifW family. In terms of assembly, homotrimer; associates with NifD.

May protect the nitrogenase Fe-Mo protein from oxidative damage. The sequence is that of Nitrogenase-stabilizing/protective protein NifW from Nostoc punctiforme (strain ATCC 29133 / PCC 73102).